Reading from the N-terminus, the 534-residue chain is High affinity cGMP-specific 3',5'-cyclic phosphodiesterase 9A (534 aa).

One can recognise a PDEase domain in the interval 175–496 (PRRDVPTYPK…EHYEELKQLD (322 aa)). H251 (proton donor) is an active-site residue. 251–255 (HNFRH) is a 3',5'-cyclic GMP binding site. Residues H255, H291, and D292 each contribute to the Zn(2+) site. D292 contributes to the 3',5'-cyclic GMP binding site. D292 serves as a coordination point for Mg(2+). S318 bears the Phosphoserine mark. 3',5'-cyclic GMP contacts are provided by residues D401, Y423, and 451–452 (AQ). D401 contacts Zn(2+). The tract at residues 500 to 534 (KELQKKTESLTSGAPENTTEKNRDAKDSEGHSPPN) is disordered. The span at 517 to 534 (TTEKNRDAKDSEGHSPPN) shows a compositional bias: basic and acidic residues.

Belongs to the cyclic nucleotide phosphodiesterase family. PDE9 subfamily. As to quaternary structure, homodimer. The cofactor is Zn(2+). It depends on Mg(2+) as a cofactor. In terms of tissue distribution, highly expressed in kidney. Lower levels in liver, lung and brain. Widely expressed in brain, with highest expression in cerebellar Purkinje cells. Present in heart (at protein level).

Its subcellular location is the cell projection. It is found in the ruffle membrane. The protein resides in the cytoplasm. It localises to the perinuclear region. The protein localises to the golgi apparatus. Its subcellular location is the endoplasmic reticulum. It is found in the cell membrane. The protein resides in the sarcolemma. The catalysed reaction is 3',5'-cyclic GMP + H2O = GMP + H(+). Its pathway is purine metabolism; 3',5'-cyclic GMP degradation; GMP from 3',5'-cyclic GMP: step 1/1. With respect to regulation, inhibited by SCH 51866 and moderately, by zaprinast. Specifically inhibited by PF-04447943 (6-[(3S,4S)-4-methyl-1-(pyrimidin-2-ylmethyl)pyrrolidin-3-yl]-1-(tetrahydro-2H-pyran-4-yl)-1,5-dihydro-4H-pyrazolo[3,4-d]pyrimidin-4-one). Its function is as follows. Specifically hydrolyzes the second messenger cGMP, which is a key regulator of many important physiological processes. Highly specific: compared to other members of the cyclic nucleotide phosphodiesterase family, has the highest affinity and selectivity for cGMP. Specifically regulates natriuretic-peptide-dependent cGMP signaling in heart, acting as a regulator of cardiac hypertrophy in myocytes and muscle. Does not regulate nitric oxide-dependent cGMP in heart. Additional experiments are required to confirm whether its ability to hydrolyze natriuretic-peptide-dependent cGMP is specific to heart or is a general feature of the protein. In brain, involved in cognitive function, such as learning and long-term memory. In Mus musculus (Mouse), this protein is High affinity cGMP-specific 3',5'-cyclic phosphodiesterase 9A (Pde9a).